The sequence spans 203 residues: Holliday junction branch migration complex subunit RuvA (203 aa).

The tract at residues 1 to 62 (MYEYFLGQVT…ENGMSLFGFF (62 aa)) is domain I. The segment at 63–141 (DADEKALFEK…DLNVDVTGQT (79 aa)) is domain II. The flexible linker stretch occupies residues 142 to 148 (ALDVDAP). The interval 149–203 (AVDGALADALAALEALGYSKADVKKVTKKLETFSQTQGADTNTLLSEGLRLLMKK) is domain III.

It belongs to the RuvA family. In terms of assembly, homotetramer. Forms an RuvA(8)-RuvB(12)-Holliday junction (HJ) complex. HJ DNA is sandwiched between 2 RuvA tetramers; dsDNA enters through RuvA and exits via RuvB. An RuvB hexamer assembles on each DNA strand where it exits the tetramer. Each RuvB hexamer is contacted by two RuvA subunits (via domain III) on 2 adjacent RuvB subunits; this complex drives branch migration. In the full resolvosome a probable DNA-RuvA(4)-RuvB(12)-RuvC(2) complex forms which resolves the HJ.

Its subcellular location is the cytoplasm. Its function is as follows. The RuvA-RuvB-RuvC complex processes Holliday junction (HJ) DNA during genetic recombination and DNA repair, while the RuvA-RuvB complex plays an important role in the rescue of blocked DNA replication forks via replication fork reversal (RFR). RuvA specifically binds to HJ cruciform DNA, conferring on it an open structure. The RuvB hexamer acts as an ATP-dependent pump, pulling dsDNA into and through the RuvAB complex. HJ branch migration allows RuvC to scan DNA until it finds its consensus sequence, where it cleaves and resolves the cruciform DNA. The polypeptide is Holliday junction branch migration complex subunit RuvA (Lactiplantibacillus plantarum (strain ATCC BAA-793 / NCIMB 8826 / WCFS1) (Lactobacillus plantarum)).